A 292-amino-acid polypeptide reads, in one-letter code: Outer membrane protein assembly factor BamD (292 aa).

The N-terminal stretch at 1–26 (MIQRPTFFTPTHLLAMLLATFVLITG) is a signal peptide. Cys27 is lipidated: N-palmitoyl cysteine. Cys27 carries the S-diacylglycerol cysteine lipid modification.

The protein belongs to the BamD family. Part of the Bam complex.

Its subcellular location is the cell outer membrane. Its function is as follows. Part of the outer membrane protein assembly complex, which is involved in assembly and insertion of beta-barrel proteins into the outer membrane. The polypeptide is Outer membrane protein assembly factor BamD (Xylella fastidiosa (strain 9a5c)).